The chain runs to 295 residues: MSTQTHPAPLRTAIVGTGNIGTDLLLKVEASPLLTCVLFAGRRAESPGIELARGRGVATSTGGIDAVVDAADDIDLVFDATSARDAVRHWAVIKPLGLPFIDLTPANQGKFCVPALNLEDCLDEQYLSMVTCGGQAAVPMARCITQIAGHVDYLEIVSASASASVGPASRANLDEYVHTTEQATAEFCSTARTKTVLIINPADPGIVMRNSIAVSTTERIDIDALRDSVTAMEKEIHSYVPGYRIVVPPVATGDCYLLTVEVEGLGDYFPRSAGNLDIITCAAVAAAEARSGLRR.

An NAD(+)-binding site is contributed by 17–20 (TGNI). The active-site Acyl-thioester intermediate is the cysteine 132. Residues 164 to 172 (SVGPASRAN) and asparagine 275 contribute to the NAD(+) site.

This sequence belongs to the acetaldehyde dehydrogenase family.

The catalysed reaction is acetaldehyde + NAD(+) + CoA = acetyl-CoA + NADH + H(+). The sequence is that of Acetaldehyde dehydrogenase 2 from Salinispora arenicola (strain CNS-205).